The primary structure comprises 114 residues: T cell receptor beta variable 28 (114 aa).

A signal peptide spans 1 to 26; it reads MGIRLLCRVAFCFLAVGLVDVKVTQS. Residues 27-114 enclose the Ig-like domain; it reads SRYLVKRTGE…TSMYLCASSL (88 aa). The cysteines at positions 42 and 110 are disulfide-linked. Asn103 is a glycosylation site (N-linked (GlcNAc...) asparagine).

Alpha-beta TR is a heterodimer composed of an alpha and beta chain; disulfide-linked. The alpha-beta TR is associated with the transmembrane signaling CD3 coreceptor proteins to form the TR-CD3 (TcR or TCR). The assembly of alpha-beta TR heterodimers with CD3 occurs in the endoplasmic reticulum where a single alpha-beta TR heterodimer associates with one CD3D-CD3E heterodimer, one CD3G-CD3E heterodimer and one CD247 homodimer forming a stable octameric structure. CD3D-CD3E and CD3G-CD3E heterodimers preferentially associate with TR alpha and TR beta chains, respectively. The association of the CD247 homodimer is the last step of TcR assembly in the endoplasmic reticulum and is required for transport to the cell surface.

The protein resides in the cell membrane. V region of the variable domain of T cell receptor (TR) beta chain that participates in the antigen recognition. Alpha-beta T cell receptors are antigen specific receptors which are essential to the immune response and are present on the cell surface of T lymphocytes. Recognize peptide-major histocompatibility (MH) (pMH) complexes that are displayed by antigen presenting cells (APC), a prerequisite for efficient T cell adaptive immunity against pathogens. Binding of alpha-beta TR to pMH complex initiates TR-CD3 clustering on the cell surface and intracellular activation of LCK that phosphorylates the ITAM motifs of CD3G, CD3D, CD3E and CD247 enabling the recruitment of ZAP70. In turn ZAP70 phosphorylates LAT, which recruits numerous signaling molecules to form the LAT signalosome. The LAT signalosome propagates signal branching to three major signaling pathways, the calcium, the mitogen-activated protein kinase (MAPK) kinase and the nuclear factor NF-kappa-B (NF-kB) pathways, leading to the mobilization of transcription factors that are critical for gene expression and essential for T cell growth and differentiation. The T cell repertoire is generated in the thymus, by V-(D)-J rearrangement. This repertoire is then shaped by intrathymic selection events to generate a peripheral T cell pool of self-MH restricted, non-autoaggressive T cells. Post-thymic interaction of alpha-beta TR with the pMH complexes shapes TR structural and functional avidity. The polypeptide is T cell receptor beta variable 28 (Homo sapiens (Human)).